Consider the following 136-residue polypeptide: Small ribosomal subunit protein uS9 (136 aa).

The interval 97–136 (SPDNRKPLKTEGHLSRDPRAKERRKYGLKKARKAPQFSKR) is disordered. A compositionally biased stretch (basic and acidic residues) spans 98-116 (PDNRKPLKTEGHLSRDPRA). The segment covering 117–136 (KERRKYGLKKARKAPQFSKR) has biased composition (basic residues).

Belongs to the universal ribosomal protein uS9 family.

This is Small ribosomal subunit protein uS9 from Prochlorococcus marinus (strain MIT 9312).